A 416-amino-acid polypeptide reads, in one-letter code: uncharacterized protein (416 aa).

The disordered stretch occupies residues 341–360 (EDREKGSQHTNNTHHHKRNL).

This is an uncharacterized protein from Human cytomegalovirus (strain AD169) (HHV-5).